The chain runs to 55 residues: Rubredoxin-2 (55 aa).

Positions 1-54 constitute a Rubredoxin-like domain; that stretch reads MRKWQCVVCGFIYDEALGLPEEGIPAGTRWEDIPADWVCPDCGVGKIDFEMIEI. Fe cation contacts are provided by Cys6, Cys9, Cys39, and Cys42.

The protein belongs to the rubredoxin family. The cofactor is Fe(3+).

It is found in the cytoplasm. The protein operates within hydrocarbon metabolism; alkane degradation. Involved in the hydrocarbon hydroxylating system, which transfers electrons from NADH to rubredoxin reductase and then through rubredoxin to alkane 1 monooxygenase. This chain is Rubredoxin-2 (rubA2), found in Pseudomonas aeruginosa (strain ATCC 15692 / DSM 22644 / CIP 104116 / JCM 14847 / LMG 12228 / 1C / PRS 101 / PAO1).